Reading from the N-terminus, the 205-residue chain is MVNLAAMVWRRLLRKRWVLALVFGLSLVYFLTSTFKQEERAVRDRNLLQVQDHDQPIPWKVQFNLGNSSRPSNQCRNSIQGKHLITDELGYVCERRDLLVNGCCNVNVPGTKQYCCDGCLSSGCCSAYEYCVSCCLQPNKQLLLERFLNRAAVAFQNLFMAVEDHFELCLAKCRTSSQSVQHENTYRDPIAKYCYGESPPELFPA.

The Cytoplasmic segment spans residues 1–16; the sequence is MVNLAAMVWRRLLRKR. Residues 17-35 traverse the membrane as a helical segment; that stretch reads WVLALVFGLSLVYFLTSTF. The Lumenal segment spans residues 36 to 205; sequence KQEERAVRDR…GESPPELFPA (170 aa). Asn-67 carries an N-linked (GlcNAc...) asparagine glycan.

It belongs to the SPRING family. Interacts with SCAP.

Its subcellular location is the golgi apparatus membrane. Functionally, positively regulates hepatic SREBP signaling pathway by modulating the proper localization of SCAP (SREBP cleavage-activating protein) to the endoplasmic reticulum, thereby controlling the level of functional SCAP. The chain is SREBP regulating gene protein from Bos taurus (Bovine).